We begin with the raw amino-acid sequence, 392 residues long: Protein O-glucosyltransferase 1 (392 aa).

A signal peptide spans 1-23 (MEWWASSPLRLWLLLFLLPSAQG). Asparagine 40 and asparagine 53 each carry an N-linked (GlcNAc...) asparagine glycan. Intrachain disulfides connect cysteine 49–cysteine 56, cysteine 54–cysteine 357, cysteine 102–cysteine 108, and cysteine 263–cysteine 286. An interaction with the consensus sequence C-X-S-X-[PA]-C in peptide substrates region spans residues 103–107 (MFPSR). Catalysis depends on aspartate 133, which acts as the Proton donor/acceptor. The segment at 172–178 (AVWPIYP) is interaction with the consensus sequence C-X-S-X-[PA]-C in peptide substrates. Position 177 (tyrosine 177) interacts with UDP-alpha-D-glucose. Asparagine 204 carries N-linked (GlcNAc...) asparagine glycosylation. UDP-alpha-D-glucose contacts are provided by residues serine 212, arginine 218, and 274 to 279 (VAASFR). An N-linked (GlcNAc...) asparagine glycan is attached at asparagine 373. The short motif at 389-392 (KTEL) is the Prevents secretion from ER element.

The protein belongs to the glycosyltransferase 90 family. Expressed in most adult tissues at different intensities. Abundantly expressed in liver. Expressed also in brain, heart, skeletal muscle, spleen, kidney, placenta, lung and peripheral blood leukocyte. Not detectable in colon, thymus and small intestine. Expressed in the epidermis, especially in the upper parts, stratum spinosum and stratum granulosum (at protein level).

Its subcellular location is the endoplasmic reticulum lumen. It catalyses the reaction L-seryl-[EGF-like domain protein] + UDP-alpha-D-xylose = 3-O-(beta-D-xylosyl)-L-seryl-[EGF-like domain protein] + UDP + H(+). The enzyme catalyses L-seryl-[EGF-like domain protein] + UDP-alpha-D-glucose = 3-O-(beta-D-glucosyl)-L-seryl-[EGF-like domain protein] + UDP + H(+). Its pathway is protein modification; protein glycosylation. Functionally, dual specificity glycosyltransferase that catalyzes the transfer of glucose and xylose from UDP-glucose and UDP-xylose, respectively, to a serine residue found in the consensus sequence of C-X-S-X-P-C. Specifically targets extracellular EGF repeats of protein such as CRB2, F7, F9 and NOTCH2. Acts as a positive regulator of Notch signaling by mediating O-glucosylation of Notch, leading to regulate muscle development. Notch glucosylation does not affect Notch ligand binding. Required during early development to promote gastrulation: acts by mediating O-glucosylation of CRB2, which is required for CRB2 localization to the cell membrane. This chain is Protein O-glucosyltransferase 1, found in Homo sapiens (Human).